We begin with the raw amino-acid sequence, 309 residues long: Homoserine kinase (309 aa).

Pro91–Cys101 is a binding site for ATP.

Belongs to the GHMP kinase family. Homoserine kinase subfamily.

The protein resides in the cytoplasm. The catalysed reaction is L-homoserine + ATP = O-phospho-L-homoserine + ADP + H(+). It functions in the pathway amino-acid biosynthesis; L-threonine biosynthesis; L-threonine from L-aspartate: step 4/5. Catalyzes the ATP-dependent phosphorylation of L-homoserine to L-homoserine phosphate. The chain is Homoserine kinase from Yersinia enterocolitica serotype O:8 / biotype 1B (strain NCTC 13174 / 8081).